A 499-amino-acid chain; its full sequence is Cytochrome P450 71A27 (499 aa).

The helical transmembrane segment at 3-23 threads the bilayer; the sequence is MILISLCLTTLLAFLFLKPLL. Cys-438 serves as a coordination point for heme.

Belongs to the cytochrome P450 family. Heme serves as cofactor.

It is found in the membrane. In Arabidopsis thaliana (Mouse-ear cress), this protein is Cytochrome P450 71A27 (CYP71A27).